We begin with the raw amino-acid sequence, 611 residues long: BTB/POZ domain-containing protein 9 (611 aa).

Positions 36 to 104 (GDVTFVVEKK…IYTGRATLTD (69 aa)) constitute a BTB domain. Residues 142–240 (VCMTFDVASL…SLTELLNVVR (99 aa)) enclose the BACK domain. Residues 560-611 (QSAQKDSSDEPGTGGASAAGQQLDPHALQAPSGSSLPSSPGSNSRSPNRQHQ) are disordered. The segment covering 586–611 (ALQAPSGSSLPSSPGSNSRSPNRQHQ) has biased composition (low complexity).

In Bos taurus (Bovine), this protein is BTB/POZ domain-containing protein 9 (BTBD9).